The following is a 224-amino-acid chain: UPF0758 protein Neut_0782 (224 aa).

The MPN domain maps to 102-224; it reads IMDSPQSVRS…TVSFAERGLI (123 aa). Residues His-173, His-175, and Asp-186 each contribute to the Zn(2+) site. Positions 173-186 match the JAMM motif motif; that stretch reads HNHPSGVAEPSRAD.

It belongs to the UPF0758 family.

The chain is UPF0758 protein Neut_0782 from Nitrosomonas eutropha (strain DSM 101675 / C91 / Nm57).